The chain runs to 546 residues: T-complex protein 1 subunit zeta (546 aa).

Ser-2 bears the N-acetylserine mark. A Phosphoserine modification is found at Ser-249.

It belongs to the TCP-1 chaperonin family. As to quaternary structure, heterooligomeric complex of about 850 to 900 kDa that forms two stacked rings, 12 to 16 nm in diameter.

It is found in the cytoplasm. Molecular chaperone; assists the folding of proteins upon ATP hydrolysis. Known to play a role, in vitro, in the folding of actin and tubulin. In yeast may play a role in mitotic spindle formation. This Saccharomyces cerevisiae (strain ATCC 204508 / S288c) (Baker's yeast) protein is T-complex protein 1 subunit zeta (CCT6).